Consider the following 405-residue polypeptide: uncharacterized protein (405 aa).

At 1 to 18 (MPEPVAEPALNGLRLNLR) the chain is on the cytoplasmic side. The helical transmembrane segment at 19 to 39 (IVSIVMFNFASYLTIGLPLAV) threads the bilayer. At 40 to 46 (LPGYVHD) the chain is on the periplasmic side. Residues 47–67 (VMGFSAFWAGLVISLQYFATL) traverse the membrane as a helical segment. At 68-84 (LSRPHAGRYADSLGPKK) the chain is on the cytoplasmic side. Residues 85 to 105 (IVVFGLCGCFLSGLGYLTAGL) traverse the membrane as a helical segment. A topological domain (periplasmic) is located at residue Thr-106. Residues 107–127 (ASLPVISLLLLCLGRVILGIG) traverse the membrane as a helical segment. At 128-155 (QSFAGTGSTLWGVGVVGSLHIGRVISWN) the chain is on the cytoplasmic side. Residues 156–176 (GIVTYGAMAMGAPLGVVFYHW) form a helical membrane-spanning segment. Residue Gly-177 is a topological domain, periplasmic. Residues 178 to 198 (GLQALALIIMGVALVAILLAI) traverse the membrane as a helical segment. Over 199-223 (PRPTVKASKGKPLPFRAVLGRVWLY) the chain is Cytoplasmic. A helical transmembrane segment spans residues 224–244 (GMALALASAGFGVIATFITLF). The Periplasmic segment spans residues 245 to 251 (YDAKGWD). Residues 252–272 (GAAFALTLFSCAFVGTRLLFP) traverse the membrane as a helical segment. Topologically, residues 273-282 (NGINRIGGLN) are cytoplasmic. Residues 283–303 (VAMICFSVEIIGLLLVGVATM) form a helical membrane-spanning segment. Over 304–308 (PWMAK) the chain is Periplasmic. Residues 309-329 (IGVLLAGAGFSLVFPALGVVA) traverse the membrane as a helical segment. Residues 330-343 (VKAVPQQNQGAALA) lie on the Cytoplasmic side of the membrane. A helical membrane pass occupies residues 344-364 (TYTVFMDLSLGVTGPLAGLVM). A topological domain (periplasmic) is located at residue Ser-365. Residues 366 to 386 (WAGVPVIYLAAAGLVAIALLL) traverse the membrane as a helical segment. Residues 387–405 (TWRLKKRPPEHVPEAASSS) lie on the Cytoplasmic side of the membrane.

The protein belongs to the major facilitator superfamily. YhhS family.

It localises to the cell inner membrane. Its function is as follows. Confers high-level resistance to glyphosate when overexpressed. Overexpression has no effect on intracellular arabinose concentrations. This is an uncharacterized protein from Escherichia coli (strain K12).